Consider the following 235-residue polypeptide: LexA repressor (235 aa).

Residues 26–46 (FDEMKDALDLKSKSGIHRLIT) constitute a DNA-binding region (H-T-H motif). Active-site for autocatalytic cleavage activity residues include serine 156 and lysine 194.

The protein belongs to the peptidase S24 family. Homodimer.

It catalyses the reaction Hydrolysis of Ala-|-Gly bond in repressor LexA.. In terms of biological role, represses a number of genes involved in the response to DNA damage (SOS response), including recA and lexA. In the presence of single-stranded DNA, RecA interacts with LexA causing an autocatalytic cleavage which disrupts the DNA-binding part of LexA, leading to derepression of the SOS regulon and eventually DNA repair. The polypeptide is LexA repressor (Paramagnetospirillum magneticum (strain ATCC 700264 / AMB-1) (Magnetospirillum magneticum)).